Reading from the N-terminus, the 380-residue chain is Chorismate synthase (380 aa).

Arg-40 and Arg-46 together coordinate NADP(+). Residues 128-130 (RSS), 247-248 (QA), Gly-292, 307-311 (KPIPT), and Arg-333 contribute to the FMN site.

Belongs to the chorismate synthase family. Homotetramer. FMNH2 is required as a cofactor.

It catalyses the reaction 5-O-(1-carboxyvinyl)-3-phosphoshikimate = chorismate + phosphate. It participates in metabolic intermediate biosynthesis; chorismate biosynthesis; chorismate from D-erythrose 4-phosphate and phosphoenolpyruvate: step 7/7. Catalyzes the anti-1,4-elimination of the C-3 phosphate and the C-6 proR hydrogen from 5-enolpyruvylshikimate-3-phosphate (EPSP) to yield chorismate, which is the branch point compound that serves as the starting substrate for the three terminal pathways of aromatic amino acid biosynthesis. This reaction introduces a second double bond into the aromatic ring system. The chain is Chorismate synthase from Alkaliphilus metalliredigens (strain QYMF).